The sequence spans 185 residues: Elongation factor P (185 aa).

It belongs to the elongation factor P family.

Its subcellular location is the cytoplasm. It participates in protein biosynthesis; polypeptide chain elongation. Its function is as follows. Involved in peptide bond synthesis. Stimulates efficient translation and peptide-bond synthesis on native or reconstituted 70S ribosomes in vitro. Probably functions indirectly by altering the affinity of the ribosome for aminoacyl-tRNA, thus increasing their reactivity as acceptors for peptidyl transferase. The protein is Elongation factor P (efp) of Thermotoga maritima (strain ATCC 43589 / DSM 3109 / JCM 10099 / NBRC 100826 / MSB8).